A 415-amino-acid polypeptide reads, in one-letter code: Methylthioribose-1-phosphate isomerase (415 aa).

The Proton donor role is filled by D284.

It belongs to the eIF-2B alpha/beta/delta subunits family. MtnA subfamily.

It is found in the cytoplasm. Its subcellular location is the nucleus. The catalysed reaction is 5-(methylsulfanyl)-alpha-D-ribose 1-phosphate = 5-(methylsulfanyl)-D-ribulose 1-phosphate. It functions in the pathway amino-acid biosynthesis; L-methionine biosynthesis via salvage pathway; L-methionine from S-methyl-5-thio-alpha-D-ribose 1-phosphate: step 1/6. In terms of biological role, catalyzes the interconversion of methylthioribose-1-phosphate (MTR-1-P) into methylthioribulose-1-phosphate (MTRu-1-P). The protein is Methylthioribose-1-phosphate isomerase of Candida glabrata (strain ATCC 2001 / BCRC 20586 / JCM 3761 / NBRC 0622 / NRRL Y-65 / CBS 138) (Yeast).